Consider the following 282-residue polypeptide: 2-dehydro-3-deoxyphosphooctonate aldolase (282 aa).

The protein belongs to the KdsA family.

Its subcellular location is the cytoplasm. It catalyses the reaction D-arabinose 5-phosphate + phosphoenolpyruvate + H2O = 3-deoxy-alpha-D-manno-2-octulosonate-8-phosphate + phosphate. It participates in carbohydrate biosynthesis; 3-deoxy-D-manno-octulosonate biosynthesis; 3-deoxy-D-manno-octulosonate from D-ribulose 5-phosphate: step 2/3. Its pathway is bacterial outer membrane biogenesis; lipopolysaccharide biosynthesis. This is 2-dehydro-3-deoxyphosphooctonate aldolase from Shewanella baltica (strain OS185).